A 333-amino-acid polypeptide reads, in one-letter code: Ribonucleoside-diphosphate reductase small chain B (333 aa).

Fe cation is bound by residues D76, E107, and H110. The active site involves Y114. The Fe cation site is built by E169, E203, and H206.

The protein belongs to the ribonucleoside diphosphate reductase small chain family. Heterodimer of a large and a small chain. The cofactor is Fe cation. Expressed in roots, rosette leaves, stems and flowers.

It is found in the cytoplasm. The enzyme catalyses a 2'-deoxyribonucleoside 5'-diphosphate + [thioredoxin]-disulfide + H2O = a ribonucleoside 5'-diphosphate + [thioredoxin]-dithiol. Its function is as follows. Provides the precursors necessary for DNA synthesis. Catalyzes the biosynthesis of deoxyribonucleotides from the corresponding ribonucleotides. This Arabidopsis thaliana (Mouse-ear cress) protein is Ribonucleoside-diphosphate reductase small chain B (RNR2B).